A 61-amino-acid chain; its full sequence is Small ribosomal subunit protein uS14 (61 aa).

Residues C24, C27, C40, and C43 each contribute to the Zn(2+) site.

Belongs to the universal ribosomal protein uS14 family. Zinc-binding uS14 subfamily. Part of the 30S ribosomal subunit. Contacts proteins S3 and S10. Zn(2+) is required as a cofactor.

Its function is as follows. Binds 16S rRNA, required for the assembly of 30S particles and may also be responsible for determining the conformation of the 16S rRNA at the A site. The polypeptide is Small ribosomal subunit protein uS14 (Bifidobacterium longum (strain DJO10A)).